A 637-amino-acid polypeptide reads, in one-letter code: Threonine--tRNA ligase (637 aa).

The 61-residue stretch at 1–61 (MPNVKLPDGN…KEDCSLIIVT (61 aa)) folds into the TGS domain. Positions 242–533 (DHRKLGKALD…LIEHYAGKLP (292 aa)) are catalytic. 3 residues coordinate Zn(2+): C333, H384, and H510.

It belongs to the class-II aminoacyl-tRNA synthetase family. Homodimer. The cofactor is Zn(2+).

It localises to the cytoplasm. The catalysed reaction is tRNA(Thr) + L-threonine + ATP = L-threonyl-tRNA(Thr) + AMP + diphosphate + H(+). Functionally, catalyzes the attachment of threonine to tRNA(Thr) in a two-step reaction: L-threonine is first activated by ATP to form Thr-AMP and then transferred to the acceptor end of tRNA(Thr). Also edits incorrectly charged L-seryl-tRNA(Thr). The polypeptide is Threonine--tRNA ligase (Legionella pneumophila subsp. pneumophila (strain Philadelphia 1 / ATCC 33152 / DSM 7513)).